Consider the following 292-residue polypeptide: Ribosomal protein L11 methyltransferase (292 aa).

Residues Thr144, Gly165, Asp187, and Asn229 each contribute to the S-adenosyl-L-methionine site.

The protein belongs to the methyltransferase superfamily. PrmA family.

It is found in the cytoplasm. It carries out the reaction L-lysyl-[protein] + 3 S-adenosyl-L-methionine = N(6),N(6),N(6)-trimethyl-L-lysyl-[protein] + 3 S-adenosyl-L-homocysteine + 3 H(+). In terms of biological role, methylates ribosomal protein L11. The sequence is that of Ribosomal protein L11 methyltransferase from Pseudomonas fluorescens (strain Pf0-1).